Reading from the N-terminus, the 951-residue chain is Serine/threonine-protein phosphatase 4 regulatory subunit 1 (951 aa).

8 HEAT repeats span residues 26 to 63, 65 to 81, 82 to 119, 127 to 164, 168 to 206, 208 to 246, 248 to 285, and 287 to 324; these read ESDV…VFNR, MVAR…CDDE, RDCI…FCQE, AFSK…QELI, DVET…MVGK, ITER…VVGQ, ATEE…ATCQ, and IRRT…TFAN. Disordered regions lie at residues 325-377, 411-451, and 474-499; these read PSSS…HSSA, SESP…PLDQ, and QQDP…GPPN. The span at 332–365 shows a compositional bias: basic and acidic residues; that stretch reads FKDESKSSEDSSAEDKDRMRDNDVVEEEHRRPED. 2 stretches are compositionally biased toward polar residues: residues 411-421 and 430-445; these read SESPQEAASND and NSKS…SSPE. Over residues 474–487 the composition is skewed to basic and acidic residues; sequence QQDPEERLSPERTG. One copy of the HEAT 9 repeat lies at 506-543; sequence KELEEMIENLEPHMDDPDVKAQVDVLSAALRASSLDAH. A disordered region spans residues 590-612; sequence DYVHGGADVSPGDGFSPDEDRRP. HEAT repeat units follow at residues 699 to 735, 800 to 838, and 862 to 899; these read LTAA…LLHI, WISY…RCPK, and QFAV…EKEY. Ser-936 carries the post-translational modification Phosphoserine.

As to quaternary structure, serine/threonine-protein phosphatase 4 (PP4) occurs in different assemblies of the catalytic and one or more regulatory subunits. Component of the PP4 complex PPP4C-PPP4R1. Interacts with HDAC3.

Its function is as follows. Regulatory subunit of serine/threonine-protein phosphatase 4. May play a role in regulation of cell division in renal glomeruli. The PPP4C-PPP4R1 PP4 complex may play a role in dephosphorylation and regulation of HDAC3. Plays a role in the inhibition of TNF-induced NF-kappa-B activation by regulating the dephosphorylation of TRAF2. This chain is Serine/threonine-protein phosphatase 4 regulatory subunit 1 (Ppp4r1), found in Mus musculus (Mouse).